Reading from the N-terminus, the 318-residue chain is NADH-ubiquinone oxidoreductase chain 1 (318 aa).

Transmembrane regions (helical) follow at residues 5–25 (IISS…LTLI), 69–89 (SIFL…ILWI), 102–122 (LGLM…LTSG), 148–168 (LGLM…KLFI), 174–194 (IWLL…TLAE), 215–235 (VEFS…NILF), 253–273 (LYFS…FLWV), and 293–313 (FLPI…FFGV).

Belongs to the complex I subunit 1 family.

It is found in the mitochondrion inner membrane. The enzyme catalyses a ubiquinone + NADH + 5 H(+)(in) = a ubiquinol + NAD(+) + 4 H(+)(out). In terms of biological role, core subunit of the mitochondrial membrane respiratory chain NADH dehydrogenase (Complex I) that is believed to belong to the minimal assembly required for catalysis. Complex I functions in the transfer of electrons from NADH to the respiratory chain. The immediate electron acceptor for the enzyme is believed to be ubiquinone. This is NADH-ubiquinone oxidoreductase chain 1 (MT-ND1) from Myxine glutinosa (Atlantic hagfish).